A 122-amino-acid chain; its full sequence is Large-conductance mechanosensitive channel (122 aa).

The next 2 helical transmembrane spans lie at 14 to 34 (VLDLAVGVIIGAAFTALVKSL) and 67 to 87 (GAFLNDVINFIITAFVIFILI).

The protein belongs to the MscL family. In terms of assembly, homopentamer.

Its subcellular location is the cell membrane. Functionally, channel that opens in response to stretch forces in the membrane lipid bilayer. May participate in the regulation of osmotic pressure changes within the cell. This Lactococcus lactis subsp. lactis (strain IL1403) (Streptococcus lactis) protein is Large-conductance mechanosensitive channel.